The following is a 330-amino-acid chain: Aspartate--ammonia ligase (330 aa).

Belongs to the class-II aminoacyl-tRNA synthetase family. AsnA subfamily.

It is found in the cytoplasm. It catalyses the reaction L-aspartate + NH4(+) + ATP = L-asparagine + AMP + diphosphate + H(+). Its pathway is amino-acid biosynthesis; L-asparagine biosynthesis; L-asparagine from L-aspartate (ammonia route): step 1/1. In Shigella flexneri serotype 5b (strain 8401), this protein is Aspartate--ammonia ligase.